A 664-amino-acid polypeptide reads, in one-letter code: Protein-arginine deiminase type-3 (664 aa).

It belongs to the protein arginine deiminase family. The cofactor is Ca(2+). In terms of tissue distribution, hair follicles, and epidermis at very low levels.

Its subcellular location is the cytoplasm. The enzyme catalyses L-arginyl-[protein] + H2O = L-citrullyl-[protein] + NH4(+). Its function is as follows. Catalyzes the deimination of arginine residues of proteins. The polypeptide is Protein-arginine deiminase type-3 (PADI3) (Homo sapiens (Human)).